Consider the following 331-residue polypeptide: GTP 3',8-cyclase (331 aa).

The region spanning proline 9–proline 233 is the Radical SAM core domain. Arginine 18 provides a ligand contact to GTP. Cysteine 25 and cysteine 29 together coordinate [4Fe-4S] cluster. Residue tyrosine 31 coordinates S-adenosyl-L-methionine. Cysteine 32 contacts [4Fe-4S] cluster. Position 67 (arginine 67) interacts with GTP. Glycine 71 contacts S-adenosyl-L-methionine. Threonine 98 provides a ligand contact to GTP. Serine 122 serves as a coordination point for S-adenosyl-L-methionine. Position 159 (lysine 159) interacts with GTP. Methionine 193 contacts S-adenosyl-L-methionine. Residues cysteine 257 and cysteine 260 each contribute to the [4Fe-4S] cluster site. Arginine 262–arginine 264 is a GTP binding site. [4Fe-4S] cluster is bound at residue cysteine 274.

Belongs to the radical SAM superfamily. MoaA family. Monomer and homodimer. The cofactor is [4Fe-4S] cluster.

The enzyme catalyses GTP + AH2 + S-adenosyl-L-methionine = (8S)-3',8-cyclo-7,8-dihydroguanosine 5'-triphosphate + 5'-deoxyadenosine + L-methionine + A + H(+). Its pathway is cofactor biosynthesis; molybdopterin biosynthesis. Catalyzes the cyclization of GTP to (8S)-3',8-cyclo-7,8-dihydroguanosine 5'-triphosphate. In Ectopseudomonas mendocina (strain ymp) (Pseudomonas mendocina), this protein is GTP 3',8-cyclase.